The following is a 302-amino-acid chain: Mitochondrial glycine transporter (302 aa).

Solcar repeat units lie at residues 22 to 112 (HPVF…LKHH), 119 to 203 (PKPL…AKKL), and 213 to 297 (FSPV…MMEK). A run of 6 helical transmembrane segments spans residues 28–53 (FVCG…TRLQ), 87–113 (GVSP…KHHF), 125–150 (VMLG…TRYE), 178–201 (GLTA…TRAK), 217–243 (LNFG…KTHI), and 272–290 (GGLP…AWTV).

Belongs to the mitochondrial carrier (TC 2.A.29) family. SLC25A38 subfamily.

The protein resides in the mitochondrion inner membrane. It catalyses the reaction glycine(in) = glycine(out). Mitochondrial glycine transporter that imports glycine into the mitochondrial matrix. Plays an important role in providing glycine for the first enzymatic step in heme biosynthesis, the condensation of glycine with succinyl-CoA to produce 5-aminolevulinate (ALA) in the mitochondrial matrix. Required during erythropoiesis. Its function is as follows. May play a role as pro-apoptotic protein that induces caspase-dependent apoptosis. The protein is Mitochondrial glycine transporter of Xenopus tropicalis (Western clawed frog).